A 219-amino-acid polypeptide reads, in one-letter code: 2-hydroxy-3-keto-5-methylthiopentenyl-1-phosphate phosphatase (219 aa).

The protein belongs to the HAD-like hydrolase superfamily. MtnX family.

The catalysed reaction is 2-hydroxy-5-methylsulfanyl-3-oxopent-1-enyl phosphate + H2O = 1,2-dihydroxy-5-(methylsulfanyl)pent-1-en-3-one + phosphate. The protein operates within amino-acid biosynthesis; L-methionine biosynthesis via salvage pathway; L-methionine from S-methyl-5-thio-alpha-D-ribose 1-phosphate: step 4/6. Dephosphorylates 2-hydroxy-3-keto-5-methylthiopentenyl-1-phosphate (HK-MTPenyl-1-P) yielding 1,2-dihydroxy-3-keto-5-methylthiopentene (DHK-MTPene). The sequence is that of 2-hydroxy-3-keto-5-methylthiopentenyl-1-phosphate phosphatase from Bacillus thuringiensis subsp. konkukian (strain 97-27).